The primary structure comprises 218 residues: 1-Cys peroxiredoxin PER1 (218 aa).

One can recognise a Thioredoxin domain in the interval 4–164 (LTIGDTVPNL…VVRAVDSLLT (161 aa)). Cysteine 46 acts as the Cysteine sulfenic acid (-SOH) intermediate in catalysis. The Bipartite nuclear localization signal motif lies at 194–217 (KKMFPQGFETADLPSKKGYLRFTK).

Belongs to the peroxiredoxin family. Prx6 subfamily.

It localises to the nucleus. The protein localises to the cytoplasm. It carries out the reaction a hydroperoxide + [thioredoxin]-dithiol = an alcohol + [thioredoxin]-disulfide + H2O. In terms of biological role, thiol-specific peroxidase that catalyzes the reduction of hydrogen peroxide and organic hydroperoxides to water and alcohols, respectively. Seems to contribute to the inhibition of germination during stress. This Triticum aestivum (Wheat) protein is 1-Cys peroxiredoxin PER1 (PER1).